A 78-amino-acid polypeptide reads, in one-letter code: Acyl carrier protein (78 aa).

Positions Ser-2–Val-77 constitute a Carrier domain. O-(pantetheine 4'-phosphoryl)serine is present on Ser-37.

This sequence belongs to the acyl carrier protein (ACP) family. In terms of processing, 4'-phosphopantetheine is transferred from CoA to a specific serine of apo-ACP by AcpS. This modification is essential for activity because fatty acids are bound in thioester linkage to the sulfhydryl of the prosthetic group.

The protein localises to the cytoplasm. Its pathway is lipid metabolism; fatty acid biosynthesis. In terms of biological role, carrier of the growing fatty acid chain in fatty acid biosynthesis. This chain is Acyl carrier protein, found in Cytophaga hutchinsonii (strain ATCC 33406 / DSM 1761 / CIP 103989 / NBRC 15051 / NCIMB 9469 / D465).